A 220-amino-acid polypeptide reads, in one-letter code: MTQDELKKAVGWAALEYVKPGTIVGVGTGSTAAHFIDALASIKGQIEGAVSSSDASTAKLKSYGIQVFDCNEVDELDIYVDGADEINSQMQMIKGGGAALTREKIIAAIARKFICIADASKQVDVLGKFPLPVEVIPMARSYVARELVKLGGLPEYRQNVLTDNGNVILDVHNLTILDAIALENKINNIAGVVTVGLFANRGADVALIGTADGVKTVELK.

Substrate contacts are provided by residues Thr28–Thr31, Asp81–Asp84, and Lys94–Gly97. The active-site Proton acceptor is Glu103. A substrate-binding site is contributed by Lys121.

This sequence belongs to the ribose 5-phosphate isomerase family. As to quaternary structure, homodimer.

It catalyses the reaction aldehydo-D-ribose 5-phosphate = D-ribulose 5-phosphate. The protein operates within carbohydrate degradation; pentose phosphate pathway; D-ribose 5-phosphate from D-ribulose 5-phosphate (non-oxidative stage): step 1/1. Catalyzes the reversible conversion of ribose-5-phosphate to ribulose 5-phosphate. The polypeptide is Ribose-5-phosphate isomerase A (Yersinia enterocolitica serotype O:8 / biotype 1B (strain NCTC 13174 / 8081)).